The primary structure comprises 195 residues: Ribonuclease HII (195 aa).

One can recognise an RNase H type-2 domain in the interval 6 to 195; the sequence is SLIAGVDEVG…KSFISRLKKN (190 aa). Residues aspartate 12, glutamate 13, and aspartate 108 each contribute to the a divalent metal cation site.

Belongs to the RNase HII family. Mn(2+) is required as a cofactor. Requires Mg(2+) as cofactor.

The protein resides in the cytoplasm. The catalysed reaction is Endonucleolytic cleavage to 5'-phosphomonoester.. In terms of biological role, endonuclease that specifically degrades the RNA of RNA-DNA hybrids. The chain is Ribonuclease HII from Prochlorococcus marinus (strain NATL2A).